We begin with the raw amino-acid sequence, 660 residues long: Bifunctional polymyxin resistance protein ArnA (660 aa).

Positions 1–304 (MKAIVFAYHD…EMGIVTDVRV (304 aa)) are formyltransferase ArnAFT. The active-site Proton donor; for formyltransferase activity is H104. (6R)-10-formyltetrahydrofolate is bound by residues R114 and 136 to 140 (TAKAD). Positions 314 to 660 (RRQRVLILGV…RGAVEELGNK (347 aa)) are dehydrogenase ArnADH. NAD(+) is bound by residues D347 and 368–369 (DV). UDP-alpha-D-glucuronate contacts are provided by residues A393, Y398, and 432 to 433 (TS). The active-site Proton acceptor; for decarboxylase activity is E434. UDP-alpha-D-glucuronate contacts are provided by residues R460, N492, 526-535 (KLVDGGEQKR), and Y613. R619 functions as the Proton donor; for decarboxylase activity in the catalytic mechanism.

It in the N-terminal section; belongs to the Fmt family. UDP-L-Ara4N formyltransferase subfamily. The protein in the C-terminal section; belongs to the NAD(P)-dependent epimerase/dehydratase family. UDP-glucuronic acid decarboxylase subfamily. As to quaternary structure, homohexamer, formed by a dimer of trimers.

It carries out the reaction UDP-alpha-D-glucuronate + NAD(+) = UDP-beta-L-threo-pentopyranos-4-ulose + CO2 + NADH. It catalyses the reaction UDP-4-amino-4-deoxy-beta-L-arabinose + (6R)-10-formyltetrahydrofolate = UDP-4-deoxy-4-formamido-beta-L-arabinose + (6S)-5,6,7,8-tetrahydrofolate + H(+). It functions in the pathway nucleotide-sugar biosynthesis; UDP-4-deoxy-4-formamido-beta-L-arabinose biosynthesis; UDP-4-deoxy-4-formamido-beta-L-arabinose from UDP-alpha-D-glucuronate: step 1/3. Its pathway is nucleotide-sugar biosynthesis; UDP-4-deoxy-4-formamido-beta-L-arabinose biosynthesis; UDP-4-deoxy-4-formamido-beta-L-arabinose from UDP-alpha-D-glucuronate: step 3/3. It participates in bacterial outer membrane biogenesis; lipopolysaccharide biosynthesis. Bifunctional enzyme that catalyzes the oxidative decarboxylation of UDP-glucuronic acid (UDP-GlcUA) to UDP-4-keto-arabinose (UDP-Ara4O) and the addition of a formyl group to UDP-4-amino-4-deoxy-L-arabinose (UDP-L-Ara4N) to form UDP-L-4-formamido-arabinose (UDP-L-Ara4FN). The modified arabinose is attached to lipid A and is required for resistance to polymyxin and cationic antimicrobial peptides. The sequence is that of Bifunctional polymyxin resistance protein ArnA from Proteus mirabilis (strain HI4320).